The chain runs to 614 residues: Chaperone protein DnaK (614 aa).

At Thr176 the chain carries Phosphothreonine; by autocatalysis. The tract at residues 576–614 (YQQQQSQGGEAGAANGDASKKDDNTVDGDFHEVHDDDKK) is disordered. Residues 577–589 (QQQQSQGGEAGAA) are compositionally biased toward low complexity. The segment covering 593–614 (ASKKDDNTVDGDFHEVHDDDKK) has biased composition (basic and acidic residues).

Belongs to the heat shock protein 70 family.

In terms of biological role, acts as a chaperone. The polypeptide is Chaperone protein DnaK (Fructilactobacillus sanfranciscensis (Lactobacillus sanfranciscensis)).